Reading from the N-terminus, the 110-residue chain is METIAKHRYARTSAQKARLVADLIRGKKVAAALEILTYTNKKAAALVKKVLESAIANAEHNDGADIDDLKVTKIFVDEGPSMKRVMPRAKGRADRILKRTSHITVVVSDR.

The protein belongs to the universal ribosomal protein uL22 family. Part of the 50S ribosomal subunit.

In terms of biological role, this protein binds specifically to 23S rRNA; its binding is stimulated by other ribosomal proteins, e.g. L4, L17, and L20. It is important during the early stages of 50S assembly. It makes multiple contacts with different domains of the 23S rRNA in the assembled 50S subunit and ribosome. Functionally, the globular domain of the protein is located near the polypeptide exit tunnel on the outside of the subunit, while an extended beta-hairpin is found that lines the wall of the exit tunnel in the center of the 70S ribosome. The chain is Large ribosomal subunit protein uL22 from Mannheimia succiniciproducens (strain KCTC 0769BP / MBEL55E).